Here is a 506-residue protein sequence, read N- to C-terminus: GPI mannosyltransferase 3 (506 aa).

A glycan (N-linked (GlcNAc...) asparagine) is linked at Asn-115. 6 consecutive transmembrane segments (helical) span residues 180–200 (AFAC…LLFW), 229–249 (YGRL…NIIA), 257–277 (FVFP…SSLY), 285–305 (YLSQ…LLTM), 330–350 (FVYP…SSFS), and 358–378 (FFFL…RFHQ). Asn-395 is a glycosylation site (N-linked (GlcNAc...) asparagine).

The protein belongs to the glycosyltransferase 22 family. PIGB subfamily.

Its subcellular location is the endoplasmic reticulum membrane. The protein operates within glycolipid biosynthesis; glycosylphosphatidylinositol-anchor biosynthesis. Its function is as follows. Mannosyltransferase involved in glycosylphosphatidylinositol-anchor biosynthesis. Transfers the third mannose to Man2-GlcN-acyl-PI during GPI precursor assembly. This is GPI mannosyltransferase 3 (gpi10) from Schizosaccharomyces pombe (strain 972 / ATCC 24843) (Fission yeast).